The following is a 263-amino-acid chain: tRNA pseudouridine synthase A (263 aa).

The Nucleophile role is filled by Asp51. Tyr109 provides a ligand contact to substrate.

The protein belongs to the tRNA pseudouridine synthase TruA family. Homodimer.

The enzyme catalyses uridine(38/39/40) in tRNA = pseudouridine(38/39/40) in tRNA. Formation of pseudouridine at positions 38, 39 and 40 in the anticodon stem and loop of transfer RNAs. The polypeptide is tRNA pseudouridine synthase A (Mannheimia succiniciproducens (strain KCTC 0769BP / MBEL55E)).